Consider the following 214-residue polypeptide: Redox-sensing transcriptional repressor Rex (214 aa).

The H-T-H motif DNA-binding region spans 17–56; the sequence is LYYRIFKRFHADQVEKASSKQIADAMGIDSATVRRDFSYF. 91–96 lines the NAD(+) pocket; that stretch reads GCGNIG.

It belongs to the transcriptional regulatory Rex family. As to quaternary structure, homodimer.

It is found in the cytoplasm. Modulates transcription in response to changes in cellular NADH/NAD(+) redox state. The protein is Redox-sensing transcriptional repressor Rex of Streptococcus pyogenes serotype M4 (strain MGAS10750).